Consider the following 110-residue polypeptide: BolA-like protein 3 (110 aa).

Belongs to the BolA/IbaG family. In terms of assembly, interacts with NFU1.

Its subcellular location is the mitochondrion. Acts as a mitochondrial iron-sulfur (Fe-S) cluster assembly factor that facilitates (Fe-S) cluster insertion into a subset of mitochondrial proteins. Probably acts together with NFU1. This chain is BolA-like protein 3 (BOLA3), found in Bos taurus (Bovine).